The following is a 205-amino-acid chain: uncharacterized protein (205 aa).

Positions 1–25 are enriched in polar residues; sequence MSNNNNEAQQPVESTNVESQQNVVQ. The segment at 1-205 is disordered; that stretch reads MSNNNNEAQQ…TSDPAQQVEA (205 aa). Over residues 32 to 79 the composition is skewed to low complexity; that stretch reads NENNDNNNNNNNNNNNNNNNNNNNNNNNNSNNNNNSSNNENNENNENN. The span at 80 to 122 shows a compositional bias: basic and acidic residues; it reads SCEKSEQEKPKEPEEPVQEEKSKEPCDQQKVKENEPAEEKETE. Low complexity-rich tracts occupy residues 123 to 132 and 146 to 162; these read PAAPVEPENP and QHQQQNHEPQQTSNGES. The span at 170-185 shows a compositional bias: basic and acidic residues; sequence SENKKRSIDEAGDIKD. Polar residues predominate over residues 194–205; that stretch reads VETSDPAQQVEA.

This is an uncharacterized protein from Dictyostelium discoideum (Social amoeba).